Consider the following 227-residue polypeptide: Ribonuclease 3 (227 aa).

The region spanning 4–133 (FEKLEKLLSY…LIAAIYLDSN (130 aa)) is the RNase III domain. Glutamate 46 contacts Mg(2+). Aspartate 50 is a catalytic residue. Positions 119 and 122 each coordinate Mg(2+). The active site involves glutamate 122. The DRBM domain occupies 158-226 (DPKTALQEWA…ARSLLHRLKN (69 aa)).

This sequence belongs to the ribonuclease III family. As to quaternary structure, homodimer. Mg(2+) is required as a cofactor.

It localises to the cytoplasm. The enzyme catalyses Endonucleolytic cleavage to 5'-phosphomonoester.. Digests double-stranded RNA. Involved in the processing of primary rRNA transcript to yield the immediate precursors to the large and small rRNAs (23S and 16S). Processes some mRNAs, and tRNAs when they are encoded in the rRNA operon. Processes pre-crRNA and tracrRNA of type II CRISPR loci if present in the organism. This chain is Ribonuclease 3, found in Rickettsia africae (strain ESF-5).